Here is a 545-residue protein sequence, read N- to C-terminus: MENYRLILFSALVLVLFLMWDAWQTDYGPIPLLPPPPQPTASSGESSPVLPEAVPDAPPPEMADMDTAPILTGQKTIEVKTDLLAIKIGMASGDLYEVQLLNYPVSLKKPNEPVTLLHKRDPDLFVTQSGLRAASGPSITHETVQFSAPKTYYELIEDESSLKVPLTWEDENGIKVTKTYIFQRDSYQIDLNIKIENGTDQAWMGRAYAQFSRTPPESGGMFARSYVGAVFSTQEQEYQKVDFGDLASQSFDRRSSGGWVAMIQHYFVAAWVPREQGTNYYYGKHVQNSRYIAGVMPPQQTIAPGESGQFNLALFTGPKIQDQLAAVAPKLNLTVDYGKLTILAEPLFWLMSWFHNLVGNWGWAIVLLTFVVKLVFFKLSQTSYRSMARMRKLQPRLLALKERYGDDRQKVGQAMMELYRKEKVNPMGGCLPIVVQIPVFIALYWMLLESVELRQAPFIFWIQDLTSKDPYYILPLLMGVSMFVQQKLSPAPTDPIQAKVMALMPVMFTVFFVMFPAGLVLYWVVNNILSIAQQWYITRQIEQEG.

Residues 6-26 traverse the membrane as a helical segment; it reads LILFSALVLVLFLMWDAWQTD. The tract at residues 34–59 is disordered; it reads PPPPQPTASSGESSPVLPEAVPDAPP. 3 helical membrane-spanning segments follow: residues 357–377, 428–448, and 505–525; these read LVGN…LVFF, GGCL…WMLL, and PVMF…YWVV.

Belongs to the OXA1/ALB3/YidC family. Type 1 subfamily. Interacts with the Sec translocase complex via SecD. Specifically interacts with transmembrane segments of nascent integral membrane proteins during membrane integration.

It localises to the cell inner membrane. Functionally, required for the insertion and/or proper folding and/or complex formation of integral membrane proteins into the membrane. Involved in integration of membrane proteins that insert both dependently and independently of the Sec translocase complex, as well as at least some lipoproteins. Aids folding of multispanning membrane proteins. The chain is Membrane protein insertase YidC from Nitrosococcus oceani (strain ATCC 19707 / BCRC 17464 / JCM 30415 / NCIMB 11848 / C-107).